A 389-amino-acid polypeptide reads, in one-letter code: F-box protein At3g19880 (389 aa).

The region spanning 2-49 (TMMSDLTQDLVEEILSRVPITSLGAVRSTCKGWNALSKERILCIGEPK) is the F-box domain.

This Arabidopsis thaliana (Mouse-ear cress) protein is F-box protein At3g19880.